The sequence spans 231 residues: 5'-methylthioadenosine/S-adenosylhomocysteine nucleosidase (231 aa).

Glu12 serves as the catalytic Proton acceptor. Substrate contacts are provided by residues Gly78, Met153, and 174–175 (ME). Catalysis depends on Asp198, which acts as the Proton donor.

The protein belongs to the PNP/UDP phosphorylase family. MtnN subfamily.

The catalysed reaction is S-adenosyl-L-homocysteine + H2O = S-(5-deoxy-D-ribos-5-yl)-L-homocysteine + adenine. The enzyme catalyses S-methyl-5'-thioadenosine + H2O = 5-(methylsulfanyl)-D-ribose + adenine. It catalyses the reaction 5'-deoxyadenosine + H2O = 5-deoxy-D-ribose + adenine. It participates in amino-acid biosynthesis; L-methionine biosynthesis via salvage pathway; S-methyl-5-thio-alpha-D-ribose 1-phosphate from S-methyl-5'-thioadenosine (hydrolase route): step 1/2. Catalyzes the irreversible cleavage of the glycosidic bond in both 5'-methylthioadenosine (MTA) and S-adenosylhomocysteine (SAH/AdoHcy) to adenine and the corresponding thioribose, 5'-methylthioribose and S-ribosylhomocysteine, respectively. Also cleaves 5'-deoxyadenosine, a toxic by-product of radical S-adenosylmethionine (SAM) enzymes, into 5-deoxyribose and adenine. This is 5'-methylthioadenosine/S-adenosylhomocysteine nucleosidase from Bacillus subtilis (strain 168).